The sequence spans 210 residues: MSKKDSSRRWMREHINDKFVKNAKKAGYRSRAVYKLIEVINKEKFIKPGNKVIDLGAAPGSWSQMAIKAVGKSGQVIANDILNIKPIDGIDFLQGDFTENSVYEALLNLTMNQKVNVVLSDIAPNISGQPSVDIPKSMYLCELALDIAIKSLTPSGYFFVKVFQGDGFDMFVESCRTYFSYVTIHKPKASRTRSKEVYLLANKLKPAKLM.

S-adenosyl-L-methionine contacts are provided by Gly-60, Trp-62, Asp-80, Asp-96, and Asp-121. Residue Lys-161 is the Proton acceptor of the active site.

Belongs to the class I-like SAM-binding methyltransferase superfamily. RNA methyltransferase RlmE family.

Its subcellular location is the cytoplasm. The enzyme catalyses uridine(2552) in 23S rRNA + S-adenosyl-L-methionine = 2'-O-methyluridine(2552) in 23S rRNA + S-adenosyl-L-homocysteine + H(+). In terms of biological role, specifically methylates the uridine in position 2552 of 23S rRNA at the 2'-O position of the ribose in the fully assembled 50S ribosomal subunit. The chain is Ribosomal RNA large subunit methyltransferase E from Vesicomyosocius okutanii subsp. Calyptogena okutanii (strain HA).